Reading from the N-terminus, the 399-residue chain is Glutamyl-tRNA reductase (399 aa).

Residues 45–48 (TCNR), Ser93, 98–100 (EDQ), and Gln104 contribute to the substrate site. Cys46 (nucleophile) is an active-site residue. 173–178 (GAGKMG) provides a ligand contact to NADP(+).

The protein belongs to the glutamyl-tRNA reductase family. As to quaternary structure, homodimer.

The catalysed reaction is (S)-4-amino-5-oxopentanoate + tRNA(Glu) + NADP(+) = L-glutamyl-tRNA(Glu) + NADPH + H(+). It functions in the pathway porphyrin-containing compound metabolism; protoporphyrin-IX biosynthesis; 5-aminolevulinate from L-glutamyl-tRNA(Glu): step 1/2. Catalyzes the NADPH-dependent reduction of glutamyl-tRNA(Glu) to glutamate 1-semialdehyde (GSA). The protein is Glutamyl-tRNA reductase of Methanobrevibacter smithii (strain ATCC 35061 / DSM 861 / OCM 144 / PS).